The primary structure comprises 342 residues: Holliday junction branch migration complex subunit RuvB (342 aa).

The large ATPase domain (RuvB-L) stretch occupies residues 1–181 (MENRMVTPFD…FGMLCAMEFY (181 aa)). ATP is bound by residues Leu20, Arg21, Gly62, Lys65, Thr66, Thr67, 128 to 130 (EDY), Arg171, Tyr181, and Arg218. Position 66 (Thr66) interacts with Mg(2+). Residues 182 to 252 (TDEELMEIVV…GAKAALDLLE (71 aa)) are small ATPAse domain (RuvB-S). Residues 255–342 (KEGLDKIDNK…KDNQVSIFNK (88 aa)) form a head domain (RuvB-H) region. DNA is bound by residues Arg310 and Arg315.

The protein belongs to the RuvB family. Homohexamer. Forms an RuvA(8)-RuvB(12)-Holliday junction (HJ) complex. HJ DNA is sandwiched between 2 RuvA tetramers; dsDNA enters through RuvA and exits via RuvB. An RuvB hexamer assembles on each DNA strand where it exits the tetramer. Each RuvB hexamer is contacted by two RuvA subunits (via domain III) on 2 adjacent RuvB subunits; this complex drives branch migration. In the full resolvosome a probable DNA-RuvA(4)-RuvB(12)-RuvC(2) complex forms which resolves the HJ.

The protein resides in the cytoplasm. The catalysed reaction is ATP + H2O = ADP + phosphate + H(+). Functionally, the RuvA-RuvB-RuvC complex processes Holliday junction (HJ) DNA during genetic recombination and DNA repair, while the RuvA-RuvB complex plays an important role in the rescue of blocked DNA replication forks via replication fork reversal (RFR). RuvA specifically binds to HJ cruciform DNA, conferring on it an open structure. The RuvB hexamer acts as an ATP-dependent pump, pulling dsDNA into and through the RuvAB complex. RuvB forms 2 homohexamers on either side of HJ DNA bound by 1 or 2 RuvA tetramers; 4 subunits per hexamer contact DNA at a time. Coordinated motions by a converter formed by DNA-disengaged RuvB subunits stimulates ATP hydrolysis and nucleotide exchange. Immobilization of the converter enables RuvB to convert the ATP-contained energy into a lever motion, pulling 2 nucleotides of DNA out of the RuvA tetramer per ATP hydrolyzed, thus driving DNA branch migration. The RuvB motors rotate together with the DNA substrate, which together with the progressing nucleotide cycle form the mechanistic basis for DNA recombination by continuous HJ branch migration. Branch migration allows RuvC to scan DNA until it finds its consensus sequence, where it cleaves and resolves cruciform DNA. In Clostridium botulinum (strain Loch Maree / Type A3), this protein is Holliday junction branch migration complex subunit RuvB.